Reading from the N-terminus, the 169-residue chain is Disulfide bond formation protein B 1 (169 aa).

The Cytoplasmic segment spans residues 1-14 (MSDDRLGLGRERRF). Residues 15 to 31 (LVLLGIICLALIGGALY) form a helical membrane-spanning segment. At 32-49 (MQVVLGEAPCPLCILQRY) the chain is on the periplasmic side. An intrachain disulfide couples Cys-41 to Cys-44. Residues 50–64 (ALLLIALFAFIGAAM) traverse the membrane as a helical segment. Residues 65–71 (SSRRGVT) are Cytoplasmic-facing. The helical transmembrane segment at 72–89 (VMETLVVICALAGAGVAG) threads the bilayer. Topologically, residues 90–144 (HHVYTQFYPSVSCGIDVLQPIVDSLPLAKIFPLGFQVDGFCSTPYPPILGLSLAQ) are periplasmic. Residues Cys-102 and Cys-130 are joined by a disulfide bond. A helical transmembrane segment spans residues 145–163 (WALVAFVLTVILVPLGVVR). At 164–169 (NRKKTY) the chain is on the cytoplasmic side.

Belongs to the DsbB family.

The protein localises to the cell inner membrane. Its function is as follows. Required for disulfide bond formation in some periplasmic proteins. Acts by oxidizing the DsbA protein. The chain is Disulfide bond formation protein B 1 from Pseudomonas fluorescens (strain ATCC BAA-477 / NRRL B-23932 / Pf-5).